A 391-amino-acid chain; its full sequence is Somatostatin receptor type 1 (391 aa).

Positions methionine 1 to threonine 50 are disordered. The Extracellular portion of the chain corresponds to methionine 1–glycine 56. An N-linked (GlcNAc...) asparagine glycan is attached at asparagine 4. Low complexity predominate over residues proline 8–proline 18. N-linked (GlcNAc...) asparagine glycans are attached at residues asparagine 44 and asparagine 48. Residues serine 57 to leucine 84 traverse the membrane as a helical segment. Over arginine 85–asparagine 94 the chain is Cytoplasmic. A helical transmembrane segment spans residues isoleucine 95–leucine 120. The Extracellular portion of the chain corresponds to arginine 121–arginine 131. An intrachain disulfide couples cysteine 130 to cysteine 208. Residues leucine 132–valine 153 form a helical membrane-spanning segment. The Cytoplasmic portion of the chain corresponds to aspartate 154–lysine 175. The chain crosses the membrane as a helical span at residues valine 176–serine 196. At arginine 197–tryptophan 219 the chain is on the extracellular side. The chain crosses the membrane as a helical span at residues leucine 220–valine 244. Topologically, residues leucine 245–threonine 270 are cytoplasmic. A helical membrane pass occupies residues leucine 271–phenylalanine 296. Residues alanine 297–threonine 303 lie on the Extracellular side of the membrane. A helical transmembrane segment spans residues valine 304–serine 327. Over aspartate 328–leucine 391 the chain is Cytoplasmic. Cysteine 339 is lipidated: S-palmitoyl cysteine.

Belongs to the G-protein coupled receptor 1 family. As to expression, brain, pituitary, islet, jejunum, stomach, heart, spleen.

The protein localises to the cell membrane. Receptor for somatostatin with higher affinity for somatostatin-14 than -28. This receptor is coupled to phosphotyrosine phosphatase and Na(+)/H(+) exchanger via pertussis toxin insensitive G proteins. This is Somatostatin receptor type 1 (Sstr1) from Rattus norvegicus (Rat).